A 255-amino-acid polypeptide reads, in one-letter code: Electron transfer flavoprotein subunit beta (255 aa).

Ala-2 is subject to N-acetylalanine. Residues Ala-9, 39-42 (NPFC), Cys-66, and 123-134 (GKQAIDDDCNQT) each bind AMP. A recognition loop region spans residues 183–205 (ADLRLNEPRYATLPNIMKAKKKK). Lys-200 carries the post-translational modification N6,N6,N6-trimethyllysine; by ETFBKMT; alternate. The residue at position 200 (Lys-200) is an N6-acetyllysine; alternate. N6-methyllysine; alternate is present on Lys-200. At Lys-203 the chain carries N6,N6,N6-trimethyllysine; by ETFBKMT. The residue at position 210 (Lys-210) is an N6-acetyllysine; alternate. Lys-210 carries the N6-succinyllysine; alternate modification. Residues Ser-223 and Ser-226 each carry the phosphoserine modification. At Lys-238 the chain carries N6-acetyllysine. N6-acetyllysine; alternate is present on Lys-248. Position 248 is an N6-succinyllysine; alternate (Lys-248).

This sequence belongs to the ETF beta-subunit/FixA family. Heterodimer composed of ETFA and ETFB. Identified in a complex that contains ETFA, ETFB and ETFRF1. Interacts with ACADM. Methylated. Trimethylation at Lys-200 and Lys-203 may negatively regulate the activity in electron transfer from acyl-CoA dehydrogenases.

It localises to the mitochondrion matrix. In terms of biological role, heterodimeric electron transfer flavoprotein that accepts electrons from several mitochondrial dehydrogenases, including acyl-CoA dehydrogenases, glutaryl-CoA and sarcosine dehydrogenase. It transfers the electrons to the main mitochondrial respiratory chain via ETF-ubiquinone oxidoreductase. Required for normal mitochondrial fatty acid oxidation and normal amino acid metabolism. ETFB binds an AMP molecule that probably has a purely structural role. The chain is Electron transfer flavoprotein subunit beta from Bos taurus (Bovine).